We begin with the raw amino-acid sequence, 483 residues long: Altronate oxidoreductase (483 aa).

18 to 29 (IIQFGEGNFLRA) contributes to the NAD(+) binding site.

Belongs to the mannitol dehydrogenase family. UxaB subfamily.

The enzyme catalyses D-altronate + NAD(+) = keto-D-tagaturonate + NADH + H(+). It participates in carbohydrate metabolism; pentose and glucuronate interconversion. In Escherichia coli O6:K15:H31 (strain 536 / UPEC), this protein is Altronate oxidoreductase.